Reading from the N-terminus, the 680-residue chain is MTDDRFVVSAPYRPTGDQPRAIAQLSAGALGGVTFQTLLGATGTGKTFTIANVIEKVGKPTLVLAHNKTLAAQLCNELREFFPDNAVEYFVSYYDYYQPEAYIPQTDTYIEKSASINDEIDMLRHSATRSLFERRDVIVVASVSCIYGLGMPEEYLRAAIPLKVGSNIDQRELLRQLVTVQYERNDIDLGRGRFRVRGDVVEIGPAYEDRIIRVEFFGDEVEAVRWLDPVTGEVVRSVNSLNIYPAKHFVTPEEQLEQACIAIEQELEARVAELEGENKLLEAQRIKQRTRYDLEMLREVGYCNGVENYSRHLAARRPGEAPSCLIDYFPQDWLLVVDESHVTIPQIRGMYNGDAQRKKVLIDHGFRLPSAADNRPLKAPEFWDKVRQAIFVSATPGDWEVELSGGGRDPETGRMAGEHVAEQIIRPTGVLDPEVFVRPVAGQVDDLLHEIHDRVARRERVLVTTLTKRMAEDLTEYFQERGVKVRYLHSEIQAIERIEILQALRQGDFDVLIGVNLLREGLDLPEVSLVAILDADKEGFLRAERSLIQTIGRAARHVRGQVIMYADRLTASMDKAISETERRRQIQRAYNAAHGLTPQPIVKRLDANSILDYLAVSRRLNQQELEAAAAAPAEVALADIPELVSQLEIQMRDAAKKLEFEKAAEYRDKIHKLRERLLGK.

The region spanning 27 to 422 is the Helicase ATP-binding domain; that stretch reads AGALGGVTFQ…GRMAGEHVAE (396 aa). 40 to 47 serves as a coordination point for ATP; the sequence is GATGTGKT. The short motif at 93–116 is the Beta-hairpin element; sequence YYDYYQPEAYIPQTDTYIEKSASI. The Helicase C-terminal domain maps to 443–609; that stretch reads QVDDLLHEIH…PIVKRLDANS (167 aa). Residues 641-676 enclose the UVR domain; it reads PELVSQLEIQMRDAAKKLEFEKAAEYRDKIHKLRER.

Belongs to the UvrB family. As to quaternary structure, forms a heterotetramer with UvrA during the search for lesions. Interacts with UvrC in an incision complex.

It is found in the cytoplasm. The UvrABC repair system catalyzes the recognition and processing of DNA lesions. A damage recognition complex composed of 2 UvrA and 2 UvrB subunits scans DNA for abnormalities. Upon binding of the UvrA(2)B(2) complex to a putative damaged site, the DNA wraps around one UvrB monomer. DNA wrap is dependent on ATP binding by UvrB and probably causes local melting of the DNA helix, facilitating insertion of UvrB beta-hairpin between the DNA strands. Then UvrB probes one DNA strand for the presence of a lesion. If a lesion is found the UvrA subunits dissociate and the UvrB-DNA preincision complex is formed. This complex is subsequently bound by UvrC and the second UvrB is released. If no lesion is found, the DNA wraps around the other UvrB subunit that will check the other stand for damage. The protein is UvrABC system protein B of Gloeobacter violaceus (strain ATCC 29082 / PCC 7421).